The following is a 395-amino-acid chain: Succinyl-diaminopimelate desuccinylase (395 aa).

Zn(2+) is bound at residue H81. Residue D83 is part of the active site. D114 is a Zn(2+) binding site. E146 serves as the catalytic Proton acceptor. Zn(2+) contacts are provided by E147, E175, and H364.

The protein belongs to the peptidase M20A family. DapE subfamily. In terms of assembly, homodimer. The cofactor is Zn(2+). Co(2+) serves as cofactor.

It carries out the reaction N-succinyl-(2S,6S)-2,6-diaminopimelate + H2O = (2S,6S)-2,6-diaminopimelate + succinate. It participates in amino-acid biosynthesis; L-lysine biosynthesis via DAP pathway; LL-2,6-diaminopimelate from (S)-tetrahydrodipicolinate (succinylase route): step 3/3. Its function is as follows. Catalyzes the hydrolysis of N-succinyl-L,L-diaminopimelic acid (SDAP), forming succinate and LL-2,6-diaminopimelate (DAP), an intermediate involved in the bacterial biosynthesis of lysine and meso-diaminopimelic acid, an essential component of bacterial cell walls. The polypeptide is Succinyl-diaminopimelate desuccinylase (Parvibaculum lavamentivorans (strain DS-1 / DSM 13023 / NCIMB 13966)).